A 299-amino-acid polypeptide reads, in one-letter code: MAELGLNEHHQNEVINYMRFARSKRGLRLKTVDSCFQDLKESRLVEETFTIDEVSEVLNGLQAVVHSEVESELINTAHTNVLLLRQLFSQAEKWYLKLQTDVSELENRELLEQVAEFEKAEFASSNKKPIIDITKPKLVPINEGGTTELLNKEILRLQQENEKLKSRLKTIETQAVNALDEKSKLERVLQDLQLDQGNQQDFIKAQDLDDLENTVAALKSEFQKTLNDKTENQKSLEENLAAAKHDLLRVQEQLSMAEKELEKKFQQTAAYRNMKEILTKKNDQIKDLRKRLAKYESED.

Positions 145–299 are interaction with BSS9; sequence GTTELLNKEI…KRLAKYESED (155 aa). Residues 145–299 adopt a coiled-coil conformation; sequence GTTELLNKEI…KRLAKYESED (155 aa).

It belongs to the LZTFL1 family. In terms of assembly, self-associates. Interacts with BBS9; the interaction mediates the association of LZTL1 with the BBsome complex and regulates BBSome ciliary trafficking.

The protein resides in the cytoplasm. In terms of biological role, regulates ciliary localization of the BBSome complex. Together with the BBSome complex, controls SMO ciliary trafficking and contributes to the sonic hedgehog (SHH) pathway regulation. May play a role in neurite outgrowth. May have tumor suppressor function. The chain is Leucine zipper transcription factor-like protein 1 (Lztfl1) from Rattus norvegicus (Rat).